Consider the following 375-residue polypeptide: Probable butyrate kinase 2 (375 aa).

The protein belongs to the acetokinase family.

The protein localises to the cytoplasm. It carries out the reaction butanoate + ATP = butanoyl phosphate + ADP. This chain is Probable butyrate kinase 2, found in Thermotoga maritima (strain ATCC 43589 / DSM 3109 / JCM 10099 / NBRC 100826 / MSB8).